Reading from the N-terminus, the 189-residue chain is dCTP deaminase (189 aa).

Residues 112 to 117 (KSTYAR), 136 to 138 (TLE), Q157, Y171, and Q181 each bind dCTP. The active-site Proton donor/acceptor is the E138.

It belongs to the dCTP deaminase family. Homotrimer.

It catalyses the reaction dCTP + H2O + H(+) = dUTP + NH4(+). Its pathway is pyrimidine metabolism; dUMP biosynthesis; dUMP from dCTP (dUTP route): step 1/2. Catalyzes the deamination of dCTP to dUTP. The polypeptide is dCTP deaminase (Albidiferax ferrireducens (strain ATCC BAA-621 / DSM 15236 / T118) (Rhodoferax ferrireducens)).